The following is a 525-amino-acid chain: Glutamate--cysteine ligase (525 aa).

This sequence belongs to the glutamate--cysteine ligase type 1 family. Type 1 subfamily.

The enzyme catalyses L-cysteine + L-glutamate + ATP = gamma-L-glutamyl-L-cysteine + ADP + phosphate + H(+). It participates in sulfur metabolism; glutathione biosynthesis; glutathione from L-cysteine and L-glutamate: step 1/2. The polypeptide is Glutamate--cysteine ligase (Pseudomonas putida (strain W619)).